A 417-amino-acid chain; its full sequence is Serine hydroxymethyltransferase 4 (417 aa).

Residues leucine 121 and glycine 125–leucine 127 each bind (6S)-5,6,7,8-tetrahydrofolate. Lysine 230 bears the N6-(pyridoxal phosphate)lysine mark. Residue serine 355 to phenylalanine 357 participates in (6S)-5,6,7,8-tetrahydrofolate binding.

Belongs to the SHMT family. Homodimer. It depends on pyridoxal 5'-phosphate as a cofactor.

The protein resides in the cytoplasm. The enzyme catalyses (6R)-5,10-methylene-5,6,7,8-tetrahydrofolate + glycine + H2O = (6S)-5,6,7,8-tetrahydrofolate + L-serine. It functions in the pathway one-carbon metabolism; tetrahydrofolate interconversion. Its pathway is amino-acid biosynthesis; glycine biosynthesis; glycine from L-serine: step 1/1. Its function is as follows. Catalyzes the reversible interconversion of serine and glycine with tetrahydrofolate (THF) serving as the one-carbon carrier. This reaction serves as the major source of one-carbon groups required for the biosynthesis of purines, thymidylate, methionine, and other important biomolecules. Also exhibits THF-independent aldolase activity toward beta-hydroxyamino acids, producing glycine and aldehydes, via a retro-aldol mechanism. The chain is Serine hydroxymethyltransferase 4 from Colwellia psychrerythraea (strain 34H / ATCC BAA-681) (Vibrio psychroerythus).